A 240-amino-acid polypeptide reads, in one-letter code: MSERLIVALDVSDKEKAMDIVEELKDVVSFFKVGMELFYREGPKLIDDLKNLGLKVFLDLKLHDIPNTVARALKNLIDLEVDMVNIHALGGKEMLRAAYLVKDEALKRKGKAPIILGVTVLTSMNQESLEQVGFKIKLSQLVAILAKETKEAGLDGVVASAQEVALIKSICGTEFITVTPGIRRFEDANFDQKRVLTPKKALELGADYLVVGRPIIAASNRRLAAQKYLEEMEGVLHGSL.

Residues D10, K32, 59–68 (DLKLHDIPNT), T122, R183, Q192, G212, and R213 each bind substrate. K61 (proton donor) is an active-site residue.

It belongs to the OMP decarboxylase family. Type 1 subfamily. In terms of assembly, homodimer.

It catalyses the reaction orotidine 5'-phosphate + H(+) = UMP + CO2. It functions in the pathway pyrimidine metabolism; UMP biosynthesis via de novo pathway; UMP from orotate: step 2/2. In terms of biological role, catalyzes the decarboxylation of orotidine 5'-monophosphate (OMP) to uridine 5'-monophosphate (UMP). The chain is Orotidine 5'-phosphate decarboxylase from Carboxydothermus hydrogenoformans (strain ATCC BAA-161 / DSM 6008 / Z-2901).